The chain runs to 200 residues: NADH-quinone oxidoreductase subunit B (200 aa).

Residues C78, C79, C144, and C174 each contribute to the [4Fe-4S] cluster site.

Belongs to the complex I 20 kDa subunit family. NDH-1 is composed of 14 different subunits. Subunits NuoB, C, D, E, F, and G constitute the peripheral sector of the complex. The cofactor is [4Fe-4S] cluster.

Its subcellular location is the cell membrane. It carries out the reaction a quinone + NADH + 5 H(+)(in) = a quinol + NAD(+) + 4 H(+)(out). Functionally, NDH-1 shuttles electrons from NADH, via FMN and iron-sulfur (Fe-S) centers, to quinones in the respiratory chain. The immediate electron acceptor for the enzyme in this species is believed to be ubiquinone. Couples the redox reaction to proton translocation (for every two electrons transferred, four hydrogen ions are translocated across the cytoplasmic membrane), and thus conserves the redox energy in a proton gradient. The chain is NADH-quinone oxidoreductase subunit B from Dehalococcoides mccartyi (strain CBDB1).